The following is a 412-amino-acid chain: CCA-adding enzyme (412 aa).

ATP is bound by residues S41 and K44. Positions 41 and 44 each coordinate CTP. Mg(2+) is bound by residues D53, D55, and D106. Positions 129, 149, and 158 each coordinate ATP. Residues H129, K149, and Y158 each coordinate CTP.

The protein belongs to the tRNA nucleotidyltransferase/poly(A) polymerase family. Archaeal CCA-adding enzyme subfamily. As to quaternary structure, homodimer. It depends on Mg(2+) as a cofactor.

The enzyme catalyses a tRNA precursor + 2 CTP + ATP = a tRNA with a 3' CCA end + 3 diphosphate. It carries out the reaction a tRNA with a 3' CCA end + 2 CTP + ATP = a tRNA with a 3' CCACCA end + 3 diphosphate. Functionally, catalyzes the addition and repair of the essential 3'-terminal CCA sequence in tRNAs without using a nucleic acid template. Adds these three nucleotides in the order of C, C, and A to the tRNA nucleotide-73, using CTP and ATP as substrates and producing inorganic pyrophosphate. tRNA 3'-terminal CCA addition is required both for tRNA processing and repair. Also involved in tRNA surveillance by mediating tandem CCA addition to generate a CCACCA at the 3' terminus of unstable tRNAs. While stable tRNAs receive only 3'-terminal CCA, unstable tRNAs are marked with CCACCA and rapidly degraded. The polypeptide is CCA-adding enzyme (Saccharolobus solfataricus (strain ATCC 35092 / DSM 1617 / JCM 11322 / P2) (Sulfolobus solfataricus)).